The primary structure comprises 296 residues: 4-diphosphocytidyl-2-C-methyl-D-erythritol kinase (296 aa).

Lysine 14 is an active-site residue. Position 97–107 (97–107) interacts with ATP; the sequence is PMGAGMGGGSS. Aspartate 139 is an active-site residue.

This sequence belongs to the GHMP kinase family. IspE subfamily.

The catalysed reaction is 4-CDP-2-C-methyl-D-erythritol + ATP = 4-CDP-2-C-methyl-D-erythritol 2-phosphate + ADP + H(+). The protein operates within isoprenoid biosynthesis; isopentenyl diphosphate biosynthesis via DXP pathway; isopentenyl diphosphate from 1-deoxy-D-xylulose 5-phosphate: step 3/6. Its function is as follows. Catalyzes the phosphorylation of the position 2 hydroxy group of 4-diphosphocytidyl-2C-methyl-D-erythritol. In Polynucleobacter necessarius subsp. necessarius (strain STIR1), this protein is 4-diphosphocytidyl-2-C-methyl-D-erythritol kinase.